The primary structure comprises 476 residues: WD repeat, SAM and U-box domain-containing protein 1 (476 aa).

7 WD repeats span residues 10–47 (DHSDDVNCCAFSSSCLATCSLDKTIRIYSLNDFTELPY), 52–91 (GHTYAVHCCCFSPSGHTLASCSTDGATIIWDTSDGRMLAV), 95–134 (PTGSPVRVCRFSPESTYLVSGAADGSVVLWNVHSMKFYRS), 137–176 (VKDGSLVACAFSPGGNFFVTGSSCGDLTVWDDKMRCLCNE), 178–227 (AHDL…FLGG), 237–276 (GHSAPVLTCAFSYDGQMLVSGSVDKCVIIYETNTGNILHT), and 279–318 (QHTRYVTTCAFAPCSLFLATGSMDKTVHIWKLDNKQPCAG). Positions 333–396 (WSEDDVSAWL…LQKIEELRMK (64 aa)) constitute an SAM domain. Positions 403–476 (AVPDEFLCPI…ISRWLETQQK (74 aa)) constitute a U-box domain.

This Gallus gallus (Chicken) protein is WD repeat, SAM and U-box domain-containing protein 1 (WDSUB1).